Here is a 462-residue protein sequence, read N- to C-terminus: A-type ATP synthase subunit B (462 aa).

The protein belongs to the ATPase alpha/beta chains family. In terms of assembly, has multiple subunits with at least A(3), B(3), C, D, E, F, H, I and proteolipid K(x).

Its subcellular location is the cell membrane. Component of the A-type ATP synthase that produces ATP from ADP in the presence of a proton gradient across the membrane. The B chain is a regulatory subunit. The protein is A-type ATP synthase subunit B of Cenarchaeum symbiosum (strain A).